Reading from the N-terminus, the 208-residue chain is dITP/XTP pyrophosphatase (208 aa).

17-22 (SNNPGK) contributes to the substrate binding site. Residues D49 and D78 each contribute to the Mg(2+) site. Residue D78 is the Proton acceptor of the active site. Residues S79, 164-167 (FGYD), K187, and 192-193 (HR) each bind substrate.

Belongs to the HAM1 NTPase family. In terms of assembly, homodimer. The cofactor is Mg(2+).

It catalyses the reaction XTP + H2O = XMP + diphosphate + H(+). The catalysed reaction is dITP + H2O = dIMP + diphosphate + H(+). The enzyme catalyses ITP + H2O = IMP + diphosphate + H(+). Pyrophosphatase that catalyzes the hydrolysis of nucleoside triphosphates to their monophosphate derivatives, with a high preference for the non-canonical purine nucleotides XTP (xanthosine triphosphate), dITP (deoxyinosine triphosphate) and ITP. Seems to function as a house-cleaning enzyme that removes non-canonical purine nucleotides from the nucleotide pool, thus preventing their incorporation into DNA/RNA and avoiding chromosomal lesions. This chain is dITP/XTP pyrophosphatase, found in Burkholderia pseudomallei (strain K96243).